A 456-amino-acid polypeptide reads, in one-letter code: Enolase (456 aa).

Gln-164 is a (2R)-2-phosphoglycerate binding site. Residue Glu-207 is the Proton donor of the active site. Mg(2+) contacts are provided by Asp-244, Glu-287, and Asp-314. Residues Lys-339, Arg-368, Ser-369, and Lys-390 each coordinate (2R)-2-phosphoglycerate. Lys-339 functions as the Proton acceptor in the catalytic mechanism.

This sequence belongs to the enolase family. As to quaternary structure, component of the RNA degradosome, a multiprotein complex involved in RNA processing and mRNA degradation. Mg(2+) serves as cofactor.

The protein resides in the cytoplasm. The protein localises to the secreted. It is found in the cell surface. The enzyme catalyses (2R)-2-phosphoglycerate = phosphoenolpyruvate + H2O. Its pathway is carbohydrate degradation; glycolysis; pyruvate from D-glyceraldehyde 3-phosphate: step 4/5. In terms of biological role, catalyzes the reversible conversion of 2-phosphoglycerate (2-PG) into phosphoenolpyruvate (PEP). It is essential for the degradation of carbohydrates via glycolysis. In Francisella tularensis subsp. holarctica (strain OSU18), this protein is Enolase.